A 467-amino-acid polypeptide reads, in one-letter code: Phosphoglucosamine mutase (467 aa).

Ser-120 acts as the Phosphoserine intermediate in catalysis. Residues Ser-120, Asp-261, Asp-263, and Asp-265 each contribute to the Mg(2+) site. Ser-120 carries the phosphoserine modification.

This sequence belongs to the phosphohexose mutase family. The cofactor is Mg(2+). Post-translationally, activated by phosphorylation.

It catalyses the reaction alpha-D-glucosamine 1-phosphate = D-glucosamine 6-phosphate. Catalyzes the conversion of glucosamine-6-phosphate to glucosamine-1-phosphate. This is Phosphoglucosamine mutase from Parafrankia sp. (strain EAN1pec).